We begin with the raw amino-acid sequence, 272 residues long: Orotidine 5'-phosphate decarboxylase (272 aa).

Residue Lys-95 is the Proton donor of the active site.

It belongs to the OMP decarboxylase family. Type 2 subfamily.

The enzyme catalyses orotidine 5'-phosphate + H(+) = UMP + CO2. It functions in the pathway pyrimidine metabolism; UMP biosynthesis via de novo pathway; UMP from orotate: step 2/2. This Bordetella avium (strain 197N) protein is Orotidine 5'-phosphate decarboxylase.